A 449-amino-acid chain; its full sequence is tRNA(Ile)-lysidine synthase (449 aa).

35–40 (SGGIDS) serves as a coordination point for ATP.

The protein belongs to the tRNA(Ile)-lysidine synthase family.

It localises to the cytoplasm. It carries out the reaction cytidine(34) in tRNA(Ile2) + L-lysine + ATP = lysidine(34) in tRNA(Ile2) + AMP + diphosphate + H(+). Ligates lysine onto the cytidine present at position 34 of the AUA codon-specific tRNA(Ile) that contains the anticodon CAU, in an ATP-dependent manner. Cytidine is converted to lysidine, thus changing the amino acid specificity of the tRNA from methionine to isoleucine. This is tRNA(Ile)-lysidine synthase from Coxiella burnetii (strain RSA 493 / Nine Mile phase I).